Reading from the N-terminus, the 350-residue chain is Phosphoribosylformylglycinamidine cyclo-ligase (350 aa).

Belongs to the AIR synthase family.

The protein resides in the cytoplasm. It catalyses the reaction 2-formamido-N(1)-(5-O-phospho-beta-D-ribosyl)acetamidine + ATP = 5-amino-1-(5-phospho-beta-D-ribosyl)imidazole + ADP + phosphate + H(+). It functions in the pathway purine metabolism; IMP biosynthesis via de novo pathway; 5-amino-1-(5-phospho-D-ribosyl)imidazole from N(2)-formyl-N(1)-(5-phospho-D-ribosyl)glycinamide: step 2/2. The protein is Phosphoribosylformylglycinamidine cyclo-ligase of Pseudoalteromonas translucida (strain TAC 125).